The chain runs to 1165 residues: Chromosome partition protein Smc (1165 aa).

An ATP-binding site is contributed by 32 to 39 (PNGSGKSN). The stretch at 161-503 (AGVAEFDRKI…ETQRQVWREA (343 aa)) forms a coiled coil. Residues 518-630 (QGVHGLISQL…VFRSLELARR (113 aa)) enclose the SMC hinge domain. Coiled-coil stretches lie at residues 672-901 (ELAE…LQQR) and 946-1010 (DLSL…DCDT).

It belongs to the SMC family. As to quaternary structure, homodimer.

It localises to the cytoplasm. Required for chromosome condensation and partitioning. This is Chromosome partition protein Smc from Gloeobacter violaceus (strain ATCC 29082 / PCC 7421).